Consider the following 1668-residue polypeptide: MNVGQAAHLSGQMSGQAPQTNQVGGSGVGGADGLPQQMQDVVGLGGLDTQFLLMRNTMRDRIFEYIGRKQSSTDWRRRLPELAKRLEEILYRKFLNKADYLNMMRGPVEPQLQFAIKTLSAQNQQNQQNQQMPRQMASSSGYGTMIPTPGITQSATGNSRMPYVTDNTGLPSSGATMVPQGANTGSMSNGYQHLTTSVPLNSTTSSIPSTMGPVGIQRQVTHMIPTPGFNNQQNVPVNPDFSNGAGYFNGEPTVTSQMQQQKQFPSNQNSHQIQHIGGHSNSGMHSNMLENSSAYGLSDGHVNGGMGVHGSNMQLTNRSAASEAYINISTYGNSPKPVQQQFNQHPPQRIPTPVDISGSGNFYNTGSSALTAANNHSMGATNLPSRSRMNSMLHTNQLNMQSIQPQPQIKTEVLDQPEKMNFQSSQLTHEQLIRQQHSMQQHQMQPSSQFVQNQYHLNQQQPNSQHQQSILRSNSLKQPQLSSSHSMQLSEQGALPHTELISSQATEHADIPIYQGQYQQRSAHDNVKGGQVFGHLSSSQNFHSNASHDSQQLLPTNQQLDDSSNDVSYVLKGSQPEQMHQAQWRPQTMEKAPVTNDSSLEKQIQADLCQRTMSQDGAQQPFSSDWRLPGCTVTPADPALPKLPSGGLEQAAGNIYYFRQMKWLLLLFHAKSCLTPVGSCKFHRCFQVQELVKHFENCKRKDCSYRDCRRSRMVTEHYKACVDLQCPVCSNAKKLLQRSAELASKQKPPEPRKIAQQNTAQRIMNGVEGDIMDIDLVSDEIFDSQPSVPKRLKMQPVSPSTAEREVSMPSNAGLILQETHSELPDQNNKVGQLKMDVKIDPRPLQKPAKIGYGTDGNVPTARHNVAPGGSNEIKTHVKQEIMPIDKETSETAPEVKNEANDSTDITVSKSGKPKIKGVSMTELFTPEQIQEHINSLRLWVGQSKAKAEKNQLMGHNENENSCQLCKVEKLTFEPPPIYCSPCGARIKRNAPYYTVGTGDTRHFFCIPCYNESRGDTIEVEGQNFLKARFEKKRNDEETEEWWVQCDKCECWQHQICALFNGRRNDGGQAEYTCPNCYVEEVKRGLRMPLPQSAVLGAKDLPRTVLSDHIEDRLFKRLKQERQDRAAQERKSIEEVPGAEGLVVRVVSSVDKKLEVKPRFLEIFQEDNYPTEFPYKSKAVLLFQKIEGVEVCLFGMYVQEFGAECSYPNQRRVYLSYLDSVKYFRPEIRTVSGEALRTFVYHEILIGYLEYCKQRGFTSCYIWACPPLKGEDYILYCHPEIQKTPKSDKLREWYLSMLRKATKEEIVVELTNLYDHFFITMGECKAKVTASRLPYFDGDYWPGAAEDMINQLRQEEDDRKQQKKGKTKKIITKRALKAAGHTDLSGNASKDAMLMHKLGETIYPMKEDFIMVHLQYSCSHCCTLMVSGKRWVCHQCRSFYICDKCYDAEQQLEDRERHPSNSRDTHTLHPVDIVGLPKDTKDRDDILESEFFDTRQAFLSLCQGNHYQYDTLRRAKHSSMMVLYHLHNPTAPAFVTTCNVCCHDIETGQGWRCEVCPDFDLRKMLDLLVHASTCRSGSCQYPNCRKVKGLFRHGMQCKTRASGGCVLCKKMWYMLQLHARACRDSGCNVPRCRDLKEHLRRLQQQSDSRRRAAVNEMMRQRAAEVAANE.

3 disordered regions span residues 1 to 34, 459 to 493, and 528 to 551; these read MNVG…ADGL, QQQP…SEQG, and KGGQ…HDSQ. Polar residues predominate over residues 11 to 23; it reads GQMSGQAPQTNQV. The span at 459 to 469 shows a compositional bias: low complexity; the sequence is QQQPNSQHQQS. 2 stretches are compositionally biased toward polar residues: residues 470–491 and 536–551; these read ILRS…QLSE and LSSS…HDSQ. The segment at 651–732 adopts a TAZ-type 1 zinc-finger fold; that stretch reads AAGNIYYFRQ…DLQCPVCSNA (82 aa). The segment covering 886–899 has biased composition (basic and acidic residues); the sequence is KETSETAPEVKNEA. Residues 886–912 form a disordered region; that stretch reads KETSETAPEVKNEANDSTDITVSKSGK. The segment covering 900 to 909 has biased composition (polar residues); that stretch reads NDSTDITVSK. The PHD-type zinc finger occupies 1002 to 1079; the sequence is HFFCIPCYNE…EYTCPNCYVE (78 aa). A CBP/p300-type HAT domain is found at 1094 to 1530; it reads VLGAKDLPRT…VLYHLHNPTA (437 aa). Residues 1217-1219, 1236-1237, and Trp-1292 contribute to the acetyl-CoA site; these read LDS and RT. Residues 1342–1365 adopt a coiled-coil conformation; it reads GAAEDMINQLRQEEDDRKQQKKGK. The ZZ-type zinc finger occupies 1412–1475; it reads HLQYSCSHCC…TLHPVDIVGL (64 aa). Zn(2+) contacts are provided by Cys-1417, Cys-1420, Cys-1432, Cys-1435, Cys-1441, Cys-1444, His-1457, and His-1465. A TAZ-type 2 zinc finger spans residues 1553–1634; the sequence is EVCPDFDLRK…GCNVPRCRDL (82 aa). Residues 1630–1650 adopt a coiled-coil conformation; that stretch reads RCRDLKEHLRRLQQQSDSRRR.

Its subcellular location is the nucleus. The catalysed reaction is L-lysyl-[protein] + acetyl-CoA = N(6)-acetyl-L-lysyl-[protein] + CoA + H(+). Its function is as follows. Acetyltransferase enzyme. Acetylates histones, giving a specific tag for transcriptional activation. This chain is Probable histone acetyltransferase HAC-like 1, found in Oryza sativa subsp. japonica (Rice).